The sequence spans 310 residues: Glutaminase (310 aa).

Substrate contacts are provided by S66, N117, E161, N168, Y192, Y244, and V262. Residue K294 is modified to N6-acetyllysine.

The protein belongs to the glutaminase family. As to quaternary structure, homotetramer.

It carries out the reaction L-glutamine + H2O = L-glutamate + NH4(+). The sequence is that of Glutaminase from Escherichia coli O81 (strain ED1a).